The following is a 228-amino-acid chain: Cytochrome c oxidase subunit 2 (228 aa).

Residues 1-14 (MAYPLQLGLQDASS) lie on the Mitochondrial intermembrane side of the membrane. Residues 15 to 45 (PIMEELTNFHDHTLMIVFLISSLVLYLISLM) traverse the membrane as a helical segment. Over 46 to 59 (LTTKLIHTSTMDAQ) the chain is Mitochondrial matrix. A helical membrane pass occupies residues 60 to 87 (EVETIWTILPAIILILIALPSLRILYMM). Topologically, residues 88 to 228 (DEINNPVLTV…FENWSVSMTQ (141 aa)) are mitochondrial intermembrane. Cu cation is bound by residues His161, Cys196, Glu198, Cys200, His204, and Met207. A Mg(2+)-binding site is contributed by Glu198.

Belongs to the cytochrome c oxidase subunit 2 family. As to quaternary structure, component of the cytochrome c oxidase (complex IV, CIV), a multisubunit enzyme composed of 14 subunits. The complex is composed of a catalytic core of 3 subunits MT-CO1, MT-CO2 and MT-CO3, encoded in the mitochondrial DNA, and 11 supernumerary subunits COX4I, COX5A, COX5B, COX6A, COX6B, COX6C, COX7A, COX7B, COX7C, COX8 and NDUFA4, which are encoded in the nuclear genome. The complex exists as a monomer or a dimer and forms supercomplexes (SCs) in the inner mitochondrial membrane with NADH-ubiquinone oxidoreductase (complex I, CI) and ubiquinol-cytochrome c oxidoreductase (cytochrome b-c1 complex, complex III, CIII), resulting in different assemblies (supercomplex SCI(1)III(2)IV(1) and megacomplex MCI(2)III(2)IV(2)). Found in a complex with TMEM177, COA6, COX18, COX20, SCO1 and SCO2. Interacts with TMEM177 in a COX20-dependent manner. Interacts with COX20. Interacts with COX16. The cofactor is Cu cation.

The protein resides in the mitochondrion inner membrane. The catalysed reaction is 4 Fe(II)-[cytochrome c] + O2 + 8 H(+)(in) = 4 Fe(III)-[cytochrome c] + 2 H2O + 4 H(+)(out). Component of the cytochrome c oxidase, the last enzyme in the mitochondrial electron transport chain which drives oxidative phosphorylation. The respiratory chain contains 3 multisubunit complexes succinate dehydrogenase (complex II, CII), ubiquinol-cytochrome c oxidoreductase (cytochrome b-c1 complex, complex III, CIII) and cytochrome c oxidase (complex IV, CIV), that cooperate to transfer electrons derived from NADH and succinate to molecular oxygen, creating an electrochemical gradient over the inner membrane that drives transmembrane transport and the ATP synthase. Cytochrome c oxidase is the component of the respiratory chain that catalyzes the reduction of oxygen to water. Electrons originating from reduced cytochrome c in the intermembrane space (IMS) are transferred via the dinuclear copper A center (CU(A)) of subunit 2 and heme A of subunit 1 to the active site in subunit 1, a binuclear center (BNC) formed by heme A3 and copper B (CU(B)). The BNC reduces molecular oxygen to 2 water molecules using 4 electrons from cytochrome c in the IMS and 4 protons from the mitochondrial matrix. The chain is Cytochrome c oxidase subunit 2 (MT-CO2) from Meriones shawi (Shaw's jird).